Here is a 299-residue protein sequence, read N- to C-terminus: Coenzyme PQQ synthesis protein B (299 aa).

This sequence belongs to the PqqB family.

The protein operates within cofactor biosynthesis; pyrroloquinoline quinone biosynthesis. May be involved in the transport of PQQ or its precursor to the periplasm. The sequence is that of Coenzyme PQQ synthesis protein B from Methylorubrum extorquens (strain PA1) (Methylobacterium extorquens).